The sequence spans 409 residues: Glucan endo-1,6-beta-glucosidase B (409 aa).

Positions 1 to 16 (MKFILPLFTSLPVALA) are cleaved as a signal peptide. N35 is a glycosylation site (N-linked (GlcNAc...) asparagine). E228 acts as the Proton donor in catalysis. The active-site Nucleophile is the E330.

This sequence belongs to the glycosyl hydrolase 5 (cellulase A) family.

Its subcellular location is the secreted. It carries out the reaction Random hydrolysis of (1-&gt;6)-linkages in (1-&gt;6)-beta-D-glucans.. In terms of biological role, beta-glucanases participate in the metabolism of beta-glucan, the main structural component of the cell wall. Acts on lutean, pustulan and 1,6-oligo-beta-D-glucosides. The sequence is that of Glucan endo-1,6-beta-glucosidase B (exgB) from Emericella nidulans (strain FGSC A4 / ATCC 38163 / CBS 112.46 / NRRL 194 / M139) (Aspergillus nidulans).